We begin with the raw amino-acid sequence, 167 residues long: Large ribosomal subunit protein uL10 (167 aa).

Belongs to the universal ribosomal protein uL10 family. In terms of assembly, part of the ribosomal stalk of the 50S ribosomal subunit. The N-terminus interacts with L11 and the large rRNA to form the base of the stalk. The C-terminus forms an elongated spine to which L12 dimers bind in a sequential fashion forming a multimeric L10(L12)X complex.

Its function is as follows. Forms part of the ribosomal stalk, playing a central role in the interaction of the ribosome with GTP-bound translation factors. This Cytophaga hutchinsonii (strain ATCC 33406 / DSM 1761 / CIP 103989 / NBRC 15051 / NCIMB 9469 / D465) protein is Large ribosomal subunit protein uL10.